Reading from the N-terminus, the 142-residue chain is Large ribosomal subunit protein uL11 (142 aa).

Belongs to the universal ribosomal protein uL11 family. As to quaternary structure, part of the ribosomal stalk of the 50S ribosomal subunit. Interacts with L10 and the large rRNA to form the base of the stalk. L10 forms an elongated spine to which L12 dimers bind in a sequential fashion forming a multimeric L10(L12)X complex. One or more lysine residues are methylated.

In terms of biological role, forms part of the ribosomal stalk which helps the ribosome interact with GTP-bound translation factors. This chain is Large ribosomal subunit protein uL11, found in Shewanella sp. (strain ANA-3).